A 348-amino-acid chain; its full sequence is sn-glycerol-3-phosphate import ATP-binding protein UgpC 3 (348 aa).

Residues 4-234 form the ABC transporter domain; it reads INIIDVKKNY…PASLFVASFI (231 aa). 36–43 provides a ligand contact to ATP; the sequence is GPSGCGKS.

It belongs to the ABC transporter superfamily. sn-glycerol-3-phosphate importer (TC 3.A.1.1.3) family. The complex is composed of two ATP-binding proteins (UgpC), two transmembrane proteins (UgpA and UgpE) and a solute-binding protein (UgpB).

It is found in the cell inner membrane. The catalysed reaction is sn-glycerol 3-phosphate(out) + ATP + H2O = sn-glycerol 3-phosphate(in) + ADP + phosphate + H(+). In terms of biological role, part of the ABC transporter complex UgpBAEC involved in sn-glycerol-3-phosphate (G3P) import. Responsible for energy coupling to the transport system. In Rhizobium johnstonii (strain DSM 114642 / LMG 32736 / 3841) (Rhizobium leguminosarum bv. viciae), this protein is sn-glycerol-3-phosphate import ATP-binding protein UgpC 3.